The chain runs to 530 residues: Alpha-(1,3)-fucosyltransferase 4 (530 aa).

Disordered stretches follow at residues 1–48 (MRRL…RAVP) and 66–112 (HLGG…STPA). Residues 1–147 (MRRLWGAARK…GGRRGWRRGR (147 aa)) are Cytoplasmic-facing. Basic and acidic residues predominate over residues 88 to 106 (ASGERQRRLEPQLQHESRC). The chain crosses the membrane as a helical; Signal-anchor for type II membrane protein span at residues 148–172 (GLPWTVCVLAAAGLTCTALITYACW). The Lumenal segment spans residues 173-530 (GQLPPLPWAS…IRNLASWFER (358 aa)). N-linked (GlcNAc...) asparagine glycosylation is found at N216 and N315.

Belongs to the glycosyltransferase 10 family. As to expression, expressed at low levels in bone marrow-derived mesenchymal stem cells. In terms of tissue distribution, expressed in cord blood immature promyelocytes and in peripheral blood myeloid and lymphoid cell populations.

It is found in the golgi apparatus. The protein resides in the golgi stack membrane. It carries out the reaction a beta-D-galactosyl-(1-&gt;4)-N-acetyl-beta-D-glucosaminyl derivative + GDP-beta-L-fucose = a beta-D-galactosyl-(1-&gt;4)-[alpha-L-fucosyl-(1-&gt;3)]-N-acetyl-beta-D-glucosaminyl derivative + GDP + H(+). It catalyses the reaction an N-acetyl-alpha-neuraminyl-(2-&gt;3)-beta-D-galactosyl-(1-&gt;4)-N-acetyl-beta-D-glucosaminyl derivative + GDP-beta-L-fucose = an alpha-Neu5Ac-(2-&gt;3)-beta-D-Gal-(1-&gt;4)-[alpha-L-Fuc-(1-&gt;3)]-beta-D-GlcNAc derivative + GDP + H(+). The catalysed reaction is an alpha-Neu5Ac-(2-&gt;3)-beta-D-Gal-(1-&gt;4)-beta-D-GlcNAc-(1-&gt;3)-beta-D-Gal-(1-&gt;4)-beta-D-GlcNAc derivative + GDP-beta-L-fucose = an alpha-Neu5Ac-(2-&gt;3)-beta-D-Gal-(1-&gt;4)-beta-D-GlcNAc-(1-&gt;3)-beta-D-Gal-(1-&gt;4)-[alpha-L-Fuc-(1-&gt;3)]-beta-D-GlcNAc derivative + GDP + H(+). The enzyme catalyses an alpha-Neu5Ac-(2-&gt;3)-beta-D-Gal-(1-&gt;4)-beta-D-GlcNAc6S derivative + GDP-beta-L-fucose = an alpha-Neu5Ac-(2-&gt;3)-beta-D-Gal-(1-&gt;4)-[alpha-L-Fuc-(1-&gt;3)]-beta-D-GlcNAc6S derivative + GDP + H(+). It participates in protein modification; protein glycosylation. Its function is as follows. Catalyzes alpha(1-&gt;3) linkage of fucosyl moiety transferred from GDP-beta-L-fucose to N-acetyl glucosamine (GlcNAc) within type 2 lactosamine (LacNAc, Gal-beta(1-&gt;4)GlcNAc) glycan attached to N- or O-linked glycoproteins. Robustly fucosylates nonsialylated distal LacNAc unit of the polylactosamine chain to form Lewis X antigen (CD15), a glycan determinant known to mediate important cellular functions in development and immunity. Fucosylates with lower efficiency sialylated LacNAc acceptors to form sialyl Lewis X and 6-sulfo sialyl Lewis X determinants that serve as recognition epitopes for C-type lectins. Together with FUT7 contributes to SELE, SELL and SELP selectin ligand biosynthesis and selectin-dependent lymphocyte homing, leukocyte migration and blood leukocyte homeostasis. In a cell type specific manner, may also fucosylate the internal LacNAc unit of the polylactosamine chain to form VIM-2 antigen that serves as recognition epitope for SELE. In terms of biological role, does not generate Lewis X antigens. The chain is Alpha-(1,3)-fucosyltransferase 4 from Homo sapiens (Human).